The following is a 452-amino-acid chain: 23S rRNA (uracil(1939)-C(5))-methyltransferase RlmD (452 aa).

The segment at 1–23 is disordered; it reads MSRKKSNGGLRFQPAGGNRATQI. The region spanning 22–80 is the TRAM domain; sequence QIPVGKKQRLLIERVAGDGRGIAFIEGRTWFVSGALGGEEVEARVLGARGKVVEARLER. [4Fe-4S] cluster is bound by residues cysteine 93, cysteine 99, cysteine 102, and cysteine 181. S-adenosyl-L-methionine is bound by residues glutamine 285, phenylalanine 314, asparagine 319, glutamate 335, aspartate 362, and aspartate 383. The active-site Nucleophile is cysteine 409.

This sequence belongs to the class I-like SAM-binding methyltransferase superfamily. RNA M5U methyltransferase family. RlmD subfamily.

It catalyses the reaction uridine(1939) in 23S rRNA + S-adenosyl-L-methionine = 5-methyluridine(1939) in 23S rRNA + S-adenosyl-L-homocysteine + H(+). Functionally, catalyzes the formation of 5-methyl-uridine at position 1939 (m5U1939) in 23S rRNA. The protein is 23S rRNA (uracil(1939)-C(5))-methyltransferase RlmD of Pseudomonas entomophila (strain L48).